The sequence spans 403 residues: Na(+)-translocating NADH-quinone reductase subunit B (403 aa).

Transmembrane regions (helical) follow at residues 56–76, 121–141, 163–183, 220–240, 258–278, 287–307, 312–332, 348–368, and 371–391; these read MMIT…WNTG, AYFL…EVLF, ILPP…GVVI, WTAV…AGGI, IHGS…AVLI, IVTG…LIGS, LFGM…GMIF, WVFG…NPAF, and GMML…HFVI. T230 carries the post-translational modification FMN phosphoryl threonine.

The protein belongs to the NqrB/RnfD family. Composed of six subunits; NqrA, NqrB, NqrC, NqrD, NqrE and NqrF. FMN serves as cofactor.

Its subcellular location is the cell inner membrane. It catalyses the reaction a ubiquinone + n Na(+)(in) + NADH + H(+) = a ubiquinol + n Na(+)(out) + NAD(+). NQR complex catalyzes the reduction of ubiquinone-1 to ubiquinol by two successive reactions, coupled with the transport of Na(+) ions from the cytoplasm to the periplasm. NqrA to NqrE are probably involved in the second step, the conversion of ubisemiquinone to ubiquinol. The sequence is that of Na(+)-translocating NADH-quinone reductase subunit B from Stutzerimonas stutzeri (strain A1501) (Pseudomonas stutzeri).